The primary structure comprises 252 residues: Uridylate kinase (252 aa).

24–27 serves as a coordination point for ATP; the sequence is KLSG. The segment at 32-37 is involved in allosteric activation by GTP; that stretch reads GEEGFG. UMP is bound at residue Gly-66. Positions 67 and 71 each coordinate ATP. UMP is bound by residues Asp-86 and 147–154; that span reads TGNPFFTT. The ATP site is built by Thr-174, Tyr-180, and Asp-183.

The protein belongs to the UMP kinase family. As to quaternary structure, homohexamer.

The protein localises to the cytoplasm. The catalysed reaction is UMP + ATP = UDP + ADP. It participates in pyrimidine metabolism; CTP biosynthesis via de novo pathway; UDP from UMP (UMPK route): step 1/1. Allosterically activated by GTP. Inhibited by UTP. Its function is as follows. Catalyzes the reversible phosphorylation of UMP to UDP. The chain is Uridylate kinase from Alcanivorax borkumensis (strain ATCC 700651 / DSM 11573 / NCIMB 13689 / SK2).